The primary structure comprises 171 residues: UPF0398 protein SPy_1647/M5005_Spy1353 (171 aa).

The protein belongs to the UPF0398 family.

This Streptococcus pyogenes serotype M1 protein is UPF0398 protein SPy_1647/M5005_Spy1353.